Reading from the N-terminus, the 229-residue chain is Cell division protein FtsQ (229 aa).

Residues 1–21 traverse the membrane as a helical segment; it reads MIVLLCVIFAFLVYSNWHSWL. Topologically, residues 22–229 are periplasmic; that stretch reads ESLDRNPIRA…AAVGFSPLPK (208 aa). A POTRA domain is found at 27-97; sequence NPIRAYALTH…DRLSITLIEH (71 aa).

The protein belongs to the FtsQ/DivIB family. FtsQ subfamily. Part of a complex composed of FtsB, FtsL and FtsQ.

It localises to the cell inner membrane. In terms of biological role, essential cell division protein. May link together the upstream cell division proteins, which are predominantly cytoplasmic, with the downstream cell division proteins, which are predominantly periplasmic. May control correct divisome assembly. This chain is Cell division protein FtsQ, found in Actinobacillus pleuropneumoniae serotype 3 (strain JL03).